The following is a 375-amino-acid chain: Odorant receptor 49b (375 aa).

The Cytoplasmic portion of the chain corresponds to 1 to 28 (MFEDIQLIYMNIKILRFWALLYDKNLRR). A helical membrane pass occupies residues 29 to 49 (YVCIGLASFHIFTQIVYMMST). Residues 50–60 (NEGLTGIIRNS) are Extracellular-facing. Residues 61–77 (YMLVLWINTVLRAYLLL) form a helical membrane-spanning segment. The Cytoplasmic segment spans residues 78-121 (ADHDRYLALIQKLTEAYYDLLNLNDSYISEILDQVNKVGKLMAR). The chain crosses the membrane as a helical span at residues 122-142 (GNLFFGMLTSMGFGLYPLSSS). Topologically, residues 143 to 176 (ERVLPFGSKIPGLNEYESPYYEMWYIFQMLITPM) are extracellular. A helical membrane pass occupies residues 177 to 197 (GCCMYIPYTSLIVGLIMFGIV). At 198–251 (RCKALQHRLRQVALKHPYGDRDPRELREEIIACIRYQQSIIEYMDHINELTTMM) the chain is on the cytoplasmic side. Residues 252–272 (FLFELMAFSALLCALLFMLII) form a helical membrane-spanning segment. Over 273-278 (VSGTSQ) the chain is Extracellular. The helical transmembrane segment at 279–299 (LIIVCMYINMILAQILALYWY) threads the bilayer. Over 300 to 342 (ANELREQNLAVATAAYETEWFTFDVPLRKNILFMMMRAQRPAA) the chain is Cytoplasmic. Residues 343 to 363 (ILLGNIRPITLELFQNLLNTT) traverse the membrane as a helical segment. Topologically, residues 364 to 375 (YTFFTVLKRVYG) are extracellular.

Belongs to the insect chemoreceptor superfamily. Heteromeric odorant receptor channel (TC 1.A.69) family. Or30a subfamily. As to quaternary structure, interacts with Orco. Complexes exist early in the endomembrane system in olfactory sensory neurons (OSNs), coupling these complexes to the conserved ciliary trafficking pathway. In terms of tissue distribution, expressed in olfactory sensory neurons in the antenna.

Its subcellular location is the cell membrane. Functionally, odorant receptor which mediates acceptance or avoidance behavior, depending on its substrates. The odorant receptor repertoire encodes a large collection of odor stimuli that vary widely in identity, intensity, and duration. May form a complex with Orco to form odorant-sensing units, providing sensitive and prolonged odorant signaling and calcium permeability. The sequence is that of Odorant receptor 49b (Or49b) from Drosophila melanogaster (Fruit fly).